The sequence spans 749 residues: MIKLILSLIFLIICCNINPSESFKLITLTTGPTSDLGFNNMVNQGRIGVSKAMNIEDSRIFIVSGRNETYALLLPLIQNDDIDLVICSSQDHGDACKEIAAMYIDSPTIKTQFLVRGSGAATKNLIQITYNYASVNYISGMFAGLQTVKNKIGFLSPGSAANNNDSFVYAFWIGAKQVNPDVKFYYYNIGSYLDQDKTIAATQDLINIYGCDVIADTLDDFSAGNVAIQNNQYAMGTNGFPQRDVYGENVIFSYAYNWTKYFLPIAGSVANGTVPGKWYADFNKEDNYNFYDLSFGFKVSQNTKDLLIQKSRVLATTPRAGHPYYCNEYIEQYTKKYNLPTQAANSSCISTAGFFYINQPVGDMIYLGSYNIRLSKIEFSSSVQKGFSIVSGCLIAFVILMMVGIVYYKDTPSIRSASPIFLNFSLIGGIIIYIGIIIWVGPISTHQCNARFWLVTLGFSTLIGSLVVKNFRIWLIFDNPELKAIKITNYQLFPWVGLCLVINIVLMAILTSVGDLKAIEAQGIDSLGKYEYMTVCKMNSAGASTLYSILAYFAALLLVGVFVSWKIRIVDIEEFNESKAIANTLYAVSFCLFVIVPLMISPQEKQSETIILCVAGLFITTAALLIVFIPKFWRVFIYGKEGTNEMFKQKKSSSVATARAESLSKNSSNGGAHSGGGAVKTNRRGNIVSGDFTDDSESSLSEPNKPTKNNDGNVNVTAGAVLAEFTDDTISEFDENEVNEEPVKTESQE.

The first 22 residues, methionine 1 to serine 22, serve as a signal peptide directing secretion. Over phenylalanine 23–lysine 385 the chain is Extracellular. Residues asparagine 67, asparagine 164, asparagine 257, asparagine 271, and asparagine 345 are each glycosylated (N-linked (GlcNAc...) asparagine). The helical transmembrane segment at glycine 386–valine 406 threads the bilayer. The Cytoplasmic segment spans residues tyrosine 407–proline 419. The chain crosses the membrane as a helical span at residues isoleucine 420 to valine 440. At glycine 441–threonine 456 the chain is on the extracellular side. The chain crosses the membrane as a helical span at residues leucine 457–phenylalanine 477. The Cytoplasmic segment spans residues aspartate 478–leucine 492. A helical membrane pass occupies residues phenylalanine 493–valine 513. Residues glycine 514–serine 544 are Extracellular-facing. A helical membrane pass occupies residues threonine 545–tryptophan 565. The Cytoplasmic segment spans residues lysine 566–lysine 579. A helical transmembrane segment spans residues alanine 580–isoleucine 600. The Extracellular segment spans residues serine 601 to threonine 609. A helical transmembrane segment spans residues isoleucine 610–proline 630. The Cytoplasmic portion of the chain corresponds to lysine 631–glutamate 749. The interval alanine 658–glutamate 749 is disordered. Over residues serine 698 to valine 716 the composition is skewed to polar residues. The span at phenylalanine 725–glutamate 740 shows a compositional bias: acidic residues.

This sequence in the N-terminal section; belongs to the BMP lipoprotein family. The protein in the C-terminal section; belongs to the G-protein coupled receptor 3 family. GABA-B receptor subfamily.

The protein localises to the membrane. This chain is Metabotropic glutamate receptor-like protein M (grlM), found in Dictyostelium discoideum (Social amoeba).